The following is a 31-amino-acid chain: Sarcolipin (31 aa).

The Cytoplasmic portion of the chain corresponds to 1–7 (MERSTQE). Residues 8–26 (LFINFTVVLITVLLMWLLV) traverse the membrane as a helical segment. At 27-31 (RSYQY) the chain is on the lumenal side.

This sequence belongs to the sarcolipin family. In terms of assembly, homooligomer. Can also form heterooligomers with other sarcoplasmic/endoplasmic reticulum calcium ATPase (SERCA) regulators ARLN, ERLN, PLN and STRIT1/DWORF. Monomer. Interacts with calcium ATPase ATP2A1/SERCA1. Interacts as a monomer with ATP2A2/SERCA2; the interaction decreases ATP2A2 Ca(2+) affinity. Interacts with VMP1; VMP1 competes with PLN and SLN to prevent them from forming an inhibitory complex with ATP2A2.

The protein localises to the sarcoplasmic reticulum membrane. Its subcellular location is the endoplasmic reticulum membrane. Reversibly inhibits the activity of ATP2A1/SERCA1 and ATP2A2/SERCA2 in sarcoplasmic reticulum by decreasing the apparent affinity of the ATPase for Ca(2+). Also inhibits the activity of ATP2A3/SERCA3. Modulates calcium re-uptake during muscle relaxation and plays an important role in calcium homeostasis in muscle. Required for muscle-based, non-shivering thermogenesis. This Rattus norvegicus (Rat) protein is Sarcolipin (Sln).